We begin with the raw amino-acid sequence, 390 residues long: Multidrug resistance protein MdtL (390 aa).

Transmembrane regions (helical) follow at residues 4–24, 42–62, 69–89, 93–113, 131–151, 158–178, 199–221, 245–265, 269–289, 293–313, 316–336, and 353–375; these read FLIC…MYLV, IAFS…GKVA, PVAI…SRAT, LFLT…VVAF, LLNG…HLIM, SLFY…VFIL, LLNR…ILTF, ALTA…LSVF, TLML…SLSS, VTLF…GVAM, ALGP…IAQV, and ALNM…LMTI.

Belongs to the major facilitator superfamily. DHA1 family. MdtL (TC 2.A.1.2.22) subfamily.

It localises to the cell inner membrane. The sequence is that of Multidrug resistance protein MdtL from Citrobacter koseri (strain ATCC BAA-895 / CDC 4225-83 / SGSC4696).